The following is a 737-amino-acid chain: NAD-dependent protein deacetylase sirtuin-1 (737 aa).

Positions 1–28 are enriched in low complexity; that stretch reads MADEVALALQAAGSPSAAAAMEAASQPA. Disordered regions lie at residues 1–56 and 75–125; these read MADE…AVAP and EAAG…EAAA. A2 carries the N-acetylalanine modification. The interval 2 to 131 is interaction with CLOCK; it reads ADEVALALQA…EAAAAAAAAA (130 aa). The interval 2–268 is interaction with H1-4; that stretch reads ADEVALALQA…SCGIPDFRSR (267 aa). Phosphoserine occurs at positions 14 and 25. A Nuclear localization signal motif is present at residues 32–39; the sequence is LRKRPRRD. S46 carries the phosphoserine; by MAPK8 modification. Low complexity-rich tracts occupy residues 46 to 56 and 75 to 94; these read SPGEPSAAVAP and EAAGAAASAEREAPATAVAG. Acidic residues predominate over residues 111 to 123; sequence DFDDDEGEEEDEA. An interaction with CCAR2 region spans residues 135–533; that stretch reads RDNLLLTDGL…LHISEDSSSP (399 aa). The Nuclear export signal motif lies at 138–145; that stretch reads LLLTDGLL. Residues S151, S154, S164, and S165 each carry the phosphoserine modification. A disordered region spans residues 152–171; sequence CESDDDDRTSHASSSDWTPR. The short motif at 223–230 is the Nuclear localization signal element; it reads PPKRKKRK. The 261-residue stretch at 228 to 488 folds into the Deacetylase sirtuin-type domain; it reads KRKDINTIED…NELCHRLGGE (261 aa). Position 230 is an N6-acetyllysine (K230). The tract at residues 248–251 is required for interaction with the sumoylated form of CCAR2; that stretch reads IIVL. NAD(+)-binding positions include 253–272 and 337–340; these read GAGVSVSCGIPDFRSRDGIY and QNID. The Proton acceptor role is filled by H355. Zn(2+)-binding residues include C363 and C366. An N6-acetyllysine modification is found at K369. Residues C387 and C390 each contribute to the Zn(2+) site. An S-nitrosocysteine mark is found at C387 and C390. K422 is modified (N6-acetyllysine). Positions 425 to 431 match the Nuclear export signal motif; sequence VDLLIVI. Residues 432-434, 457-459, and C474 each bind NAD(+); these read GSS and NRE. Residue K505 is modified to N6-acetyllysine. The disordered stretch occupies residues 514-539; it reads VHLSELPPTPLHISEDSSSPERTVPQ. The residue at position 522 (T522) is a Phosphothreonine; by DYRK1A, DYRK3 and MAPK8. S527 carries the post-translational modification Phosphoserine. Positions 529–539 are enriched in polar residues; that stretch reads DSSSPERTVPQ. Position 536 is a phosphothreonine (T536). K600 bears the N6-acetyllysine mark. Phosphoserine; by CaMK2 is present on residues S649 and S651. The interval 653–713 is disordered; that stretch reads DDVLSSSSCG…GSGFGADGGD (61 aa). The segment covering 656–676 has biased composition (low complexity); it reads LSSSSCGSNSDSGTCQSPSLE. Acidic residues predominate over residues 677-697; the sequence is EPLEDESEIEEFYNGLEDDTE. S737 carries the phosphoserine modification.

The protein belongs to the sirtuin family. Class I subfamily. As to quaternary structure, interacts with XBP1 isoform 2. Found in a complex with PCAF and MYOD1 Component of the eNoSC complex, composed of SIRT1, SUV39H1 and RRP8. Interacts with HES1, HEY2 and PML. Interacts with RPS19BP1/AROS. Interacts with CCAR2 (via N-terminus); the interaction disrupts the interaction between SIRT1 and p53/TP53. Interacts with SETD7; the interaction induces the dissociation of SIRT1 from p53/TP53 and increases p53/TP53 activity. Interacts with MYCN, NR1I2, CREBZF, TSC2, TLE1, FOS, JUN, NR0B2, PPARG, NCOR, IRS1, IRS2 and NMNAT1. Interacts with HNF1A; the interaction occurs under nutrient restriction. Interacts with SUZ12; the interaction mediates the association with the PRC4 histone methylation complex which is specific as an association with PCR2 and PCR3 complex variants is not found. Interacts with FOXO1; the interaction deacetylates FOXO1, enhances its DNA-binding ability and increases its transcriptional activity. Interacts with BCL6; leads to a epigenetic repression of specific target genes. Interacts with CLOCK, BMAL1 and PER2. Interacts with PPARA; the interaction seems to be modulated by NAD(+) levels. Interacts with NR1H3 and this interaction is inhibited in the presence of CCAR2. Interacts with CHEK2 and p53/TP53. Exhibits a preferential interaction with sumoylated CCAR2 over its unmodified form. Interacts with PACS2. Interacts with SIRT7. Interacts with PUS7. Interacts with TULP3. Interacts with MORN3; the interaction enhances the ubiquitination of p53/TP53. The cofactor is Zn(2+). Post-translationally, methylated on multiple lysine residues; methylation is enhanced after DNA damage and is dispensable for deacetylase activity toward p53/TP53. Phosphorylated. Phosphorylated by STK4/MST1, resulting in inhibition of SIRT1-mediated p53/TP53 deacetylation. Phosphorylation by MAPK8/JNK1 at Ser-46 and Thr-522 leads to increased nuclear localization and enzymatic activity. Phosphorylation at Thr-522 by DYRK1A and DYRK3 activates deacetylase activity and promotes cell survival. Phosphorylation by mammalian target of rapamycin complex 1 (mTORC1) at Ser-46 inhibits deacetylation activity. Phosphorylated by CaMK2, leading to increased p53/TP53 and NF-kappa-B p65/RELA deacetylation activity. In terms of processing, proteolytically cleaved by cathepsin B upon TNF-alpha treatment to yield catalytic inactive but stable SirtT1 75 kDa fragment (75SirT1). Post-translationally, S-nitrosylated by GAPDH, leading to inhibit the NAD-dependent protein deacetylase activity. Acetylated at various Lys residues. Deacetylated via an autocatalytic mechanism. Autodeacetylation at Lys-230 promotes its protein deacetylase activity. In terms of processing, ubiquitinated; leading to degradation. Deubiquitinated by USP22; leading to stabilization. Widely expressed. Weakly expressed in liver and skeletal muscle.

It localises to the nucleus. Its subcellular location is the PML body. The protein localises to the cytoplasm. It is found in the mitochondrion. The catalysed reaction is N(6)-acetyl-L-lysyl-[protein] + NAD(+) + H2O = 2''-O-acetyl-ADP-D-ribose + nicotinamide + L-lysyl-[protein]. It carries out the reaction N(6)-propanoyl-L-lysyl-[protein] + NAD(+) + H2O = 3''-O-propanoyl-ADP-D-ribose + nicotinamide + L-lysyl-[protein]. It catalyses the reaction N(6)-(2E)-butenoyl-L-lysyl-[protein] + NAD(+) + H2O = 2''-O-(2E)-but-2-enoyl-ADP-D-ribose + nicotinamide + L-lysyl-[protein]. The enzyme catalyses N(6)-[(S)-lactoyl]-L-lysyl-[protein] + NAD(+) + H2O = 2''-O-(S)-lactoyl-ADP-D-ribose + nicotinamide + L-lysyl-[protein]. With respect to regulation, activated by resveratrol (3,5,4'-trihydroxy-trans-stilbene), butein (3,4,2',4'-tetrahydroxychalcone), piceatannol (3,5,3',4'-tetrahydroxy-trans-stilbene), Isoliquiritigenin (4,2',4'-trihydroxychalcone), fisetin (3,7,3',4'-tetrahydroxyflavone) and quercetin (3,5,7,3',4'-pentahydroxyflavone). MAPK8/JNK1 and RPS19BP1/AROS act as positive regulators of deacetylation activity. Inhibited by nicotinamide. Negatively regulated by CCAR2. Its function is as follows. NAD-dependent protein deacetylase that links transcriptional regulation directly to intracellular energetics and participates in the coordination of several separated cellular functions such as cell cycle, response to DNA damage, metabolism, apoptosis and autophagy. Can modulate chromatin function through deacetylation of histones and can promote alterations in the methylation of histones and DNA, leading to transcriptional repression. Deacetylates a broad range of transcription factors and coregulators, thereby regulating target gene expression positively and negatively. Serves as a sensor of the cytosolic ratio of NAD(+)/NADH which is altered by glucose deprivation and metabolic changes associated with caloric restriction. Is essential in skeletal muscle cell differentiation and in response to low nutrients mediates the inhibitory effect on skeletal myoblast differentiation which also involves 5'-AMP-activated protein kinase (AMPK) and nicotinamide phosphoribosyltransferase (NAMPT). Component of the eNoSC (energy-dependent nucleolar silencing) complex, a complex that mediates silencing of rDNA in response to intracellular energy status and acts by recruiting histone-modifying enzymes. The eNoSC complex is able to sense the energy status of cell: upon glucose starvation, elevation of NAD(+)/NADP(+) ratio activates SIRT1, leading to histone H3 deacetylation followed by dimethylation of H3 at 'Lys-9' (H3K9me2) by SUV39H1 and the formation of silent chromatin in the rDNA locus. Deacetylates 'Lys-266' of SUV39H1, leading to its activation. Inhibits skeletal muscle differentiation by deacetylating PCAF and MYOD1. Deacetylates H2A and 'Lys-26' of H1-4. Deacetylates 'Lys-16' of histone H4 (in vitro). Involved in NR0B2/SHP corepression function through chromatin remodeling: Recruited to LRH1 target gene promoters by NR0B2/SHP thereby stimulating histone H3 and H4 deacetylation leading to transcriptional repression. Proposed to contribute to genomic integrity via positive regulation of telomere length; however, reports on localization to pericentromeric heterochromatin are conflicting. Proposed to play a role in constitutive heterochromatin (CH) formation and/or maintenance through regulation of the available pool of nuclear SUV39H1. Upon oxidative/metabolic stress decreases SUV39H1 degradation by inhibiting SUV39H1 polyubiquitination by MDM2. This increase in SUV39H1 levels enhances SUV39H1 turnover in CH, which in turn seems to accelerate renewal of the heterochromatin which correlates with greater genomic integrity during stress response. Deacetylates 'Lys-382' of p53/TP53 and impairs its ability to induce transcription-dependent proapoptotic program and modulate cell senescence. Deacetylates TAF1B and thereby represses rDNA transcription by the RNA polymerase I. Deacetylates MYC, promotes the association of MYC with MAX and decreases MYC stability leading to compromised transformational capability. Deacetylates FOXO3 in response to oxidative stress thereby increasing its ability to induce cell cycle arrest and resistance to oxidative stress but inhibiting FOXO3-mediated induction of apoptosis transcriptional activity; also leading to FOXO3 ubiquitination and protesomal degradation. Appears to have a similar effect on MLLT7/FOXO4 in regulation of transcriptional activity and apoptosis. Deacetylates DNMT1; thereby impairs DNMT1 methyltransferase-independent transcription repressor activity, modulates DNMT1 cell cycle regulatory function and DNMT1-mediated gene silencing. Deacetylates RELA/NF-kappa-B p65 thereby inhibiting its transactivating potential and augments apoptosis in response to TNF-alpha. Deacetylates HIF1A, KAT5/TIP60, RB1 and HIC1. Deacetylates FOXO1, which increases its DNA binding ability and enhances its transcriptional activity leading to increased gluconeogenesis in liver. Inhibits E2F1 transcriptional activity and apoptotic function, possibly by deacetylation. Involved in HES1- and HEY2-mediated transcriptional repression. In cooperation with MYCN seems to be involved in transcriptional repression of DUSP6/MAPK3 leading to MYCN stabilization by phosphorylation at 'Ser-62'. Deacetylates MEF2D. Required for antagonist-mediated transcription suppression of AR-dependent genes which may be linked to local deacetylation of histone H3. Represses HNF1A-mediated transcription. Required for the repression of ESRRG by CREBZF. Deacetylates NR1H3 and NR1H2 and deacetylation of NR1H3 at 'Lys-434' positively regulates transcription of NR1H3:RXR target genes, promotes NR1H3 proteasomal degradation and results in cholesterol efflux; a promoter clearing mechanism after reach round of transcription is proposed. Involved in lipid metabolism: deacetylates LPIN1, thereby inhibiting diacylglycerol synthesis. Implicated in regulation of adipogenesis and fat mobilization in white adipocytes by repression of PPARG which probably involves association with NCOR1 and SMRT/NCOR2. Deacetylates p300/EP300 and PRMT1. Deacetylates ACSS2 leading to its activation, and HMGCS1 deacetylation. Involved in liver and muscle metabolism. Through deacetylation and activation of PPARGC1A is required to activate fatty acid oxidation in skeletal muscle under low-glucose conditions and is involved in glucose homeostasis. Involved in regulation of PPARA and fatty acid beta-oxidation in liver. Involved in positive regulation of insulin secretion in pancreatic beta cells in response to glucose; the function seems to imply transcriptional repression of UCP2. Proposed to deacetylate IRS2 thereby facilitating its insulin-induced tyrosine phosphorylation. Deacetylates SREBF1 isoform SREBP-1C thereby decreasing its stability and transactivation in lipogenic gene expression. Involved in DNA damage response by repressing genes which are involved in DNA repair, such as XPC and TP73, deacetylating XRCC6/Ku70, and facilitating recruitment of additional factors to sites of damaged DNA, such as SIRT1-deacetylated NBN can recruit ATM to initiate DNA repair and SIRT1-deacetylated XPA interacts with RPA2. Also involved in DNA repair of DNA double-strand breaks by homologous recombination and specifically single-strand annealing independently of XRCC6/Ku70 and NBN. Promotes DNA double-strand breaks by mediating deacetylation of SIRT6. Transcriptional suppression of XPC probably involves an E2F4:RBL2 suppressor complex and protein kinase B (AKT) signaling. Transcriptional suppression of TP73 probably involves E2F4 and PCAF. Deacetylates WRN thereby regulating its helicase and exonuclease activities and regulates WRN nuclear translocation in response to DNA damage. Deacetylates APEX1 at 'Lys-6' and 'Lys-7' and stimulates cellular AP endonuclease activity by promoting the association of APEX1 to XRCC1. Catalyzes deacetylation of ERCC4/XPF, thereby impairing interaction with ERCC1 and nucleotide excision repair (NER). Increases p53/TP53-mediated transcription-independent apoptosis by blocking nuclear translocation of cytoplasmic p53/TP53 and probably redirecting it to mitochondria. Deacetylates XRCC6/Ku70 at 'Lys-537' and 'Lys-540' causing it to sequester BAX away from mitochondria thereby inhibiting stress-induced apoptosis. Is involved in autophagy, presumably by deacetylating ATG5, ATG7 and MAP1LC3B/ATG8. Deacetylates AKT1 which leads to enhanced binding of AKT1 and PDK1 to PIP3 and promotes their activation. Proposed to play role in regulation of STK11/LBK1-dependent AMPK signaling pathways implicated in cellular senescence which seems to involve the regulation of the acetylation status of STK11/LBK1. Can deacetylate STK11/LBK1 and thereby increase its activity, cytoplasmic localization and association with STRAD; however, the relevance of such activity in normal cells is unclear. In endothelial cells is shown to inhibit STK11/LBK1 activity and to promote its degradation. Deacetylates SMAD7 at 'Lys-64' and 'Lys-70' thereby promoting its degradation. Deacetylates CIITA and augments its MHC class II transactivation and contributes to its stability. Deacetylates MECOM/EVI1. Deacetylates PML at 'Lys-487' and this deacetylation promotes PML control of PER2 nuclear localization. During the neurogenic transition, represses selective NOTCH1-target genes through histone deacetylation in a BCL6-dependent manner and leading to neuronal differentiation. Regulates the circadian expression of several core clock genes, including BMAL1, RORC, PER2 and CRY1 and plays a critical role in maintaining a controlled rhythmicity in histone acetylation, thereby contributing to circadian chromatin remodeling. Deacetylates BMAL1 and histones at the circadian gene promoters in order to facilitate repression by inhibitory components of the circadian oscillator. Deacetylates PER2, facilitating its ubiquitination and degradation by the proteasome. Protects cardiomyocytes against palmitate-induced apoptosis. Deacetylates XBP1 isoform 2; deacetylation decreases protein stability of XBP1 isoform 2 and inhibits its transcriptional activity. Deacetylates PCK1 and directs its activity toward phosphoenolpyruvate production promoting gluconeogenesis. Involved in the CCAR2-mediated regulation of PCK1 and NR1D1. Deacetylates CTNB1 at 'Lys-49'. In POMC (pro-opiomelanocortin) neurons, required for leptin-induced activation of PI3K signaling. Deacetylates SOX9; promoting SOX9 nuclear localization and transactivation activity. Involved in the regulation of centrosome duplication: Deacetylates CENATAC in G1 phase, allowing for SASS6 accumulation on the centrosome and subsequent procentriole assembly. Deacetylates NDC80/HEC1. In addition to protein deacetylase activity, also acts as a protein-lysine deacylase by mediating protein delactylation, depropionylation and decrotonylation. Mediates depropionylation of Osterix (SP7). Catalyzes decrotonylation of histones; it however does not represent a major histone decrotonylase. Mediates protein delactylation of TEAD1 and YAP1. In terms of biological role, deacetylates 'Lys-382' of p53/TP53, however with lower activity than isoform 1. In combination, the two isoforms exert an additive effect. Isoform 2 regulates p53/TP53 expression and cellular stress response and is in turn repressed by p53/TP53 presenting a SIRT1 isoform-dependent auto-regulatory loop. Functionally, catalytically inactive 75SirT1 may be involved in regulation of apoptosis. May be involved in protecting chondrocytes from apoptotic death by associating with cytochrome C and interfering with apoptosome assembly. The polypeptide is NAD-dependent protein deacetylase sirtuin-1 (Sirt1) (Mus musculus (Mouse)).